Here is a 469-residue protein sequence, read N- to C-terminus: 3-isopropylmalate dehydratase large subunit (469 aa).

Positions 347, 407, and 410 each coordinate [4Fe-4S] cluster.

This sequence belongs to the aconitase/IPM isomerase family. LeuC type 1 subfamily. In terms of assembly, heterodimer of LeuC and LeuD. [4Fe-4S] cluster is required as a cofactor.

The catalysed reaction is (2R,3S)-3-isopropylmalate = (2S)-2-isopropylmalate. Its pathway is amino-acid biosynthesis; L-leucine biosynthesis; L-leucine from 3-methyl-2-oxobutanoate: step 2/4. In terms of biological role, catalyzes the isomerization between 2-isopropylmalate and 3-isopropylmalate, via the formation of 2-isopropylmaleate. The chain is 3-isopropylmalate dehydratase large subunit from Sorangium cellulosum (strain So ce56) (Polyangium cellulosum (strain So ce56)).